The following is a 713-amino-acid chain: Methionine--tRNA ligase (713 aa).

A 'HIGH' region motif is present at residues 31 to 41 (PYANGSIHLGH). Zn(2+) is bound by residues Cys162, Cys165, Cys175, and Cys178. The 'KMSKS' region signature appears at 348-352 (KMSKS). Lys351 contacts ATP. A tRNA-binding domain is found at 609–713 (DFAKIDLRIV…DGAKAGMRVK (105 aa)).

Belongs to the class-I aminoacyl-tRNA synthetase family. MetG type 1 subfamily. As to quaternary structure, homodimer. Requires Zn(2+) as cofactor.

It is found in the cytoplasm. The catalysed reaction is tRNA(Met) + L-methionine + ATP = L-methionyl-tRNA(Met) + AMP + diphosphate. Its function is as follows. Is required not only for elongation of protein synthesis but also for the initiation of all mRNA translation through initiator tRNA(fMet) aminoacylation. The sequence is that of Methionine--tRNA ligase from Colwellia psychrerythraea (strain 34H / ATCC BAA-681) (Vibrio psychroerythus).